Here is a 188-residue protein sequence, read N- to C-terminus: Large ribosomal subunit protein bL9 (188 aa).

A compositionally biased stretch (basic and acidic residues) spans 149–170; sequence RSEEEAERQARGEEIGVEKEEP. The disordered stretch occupies residues 149–188; that stretch reads RSEEEAERQARGEEIGVEKEEPSGFVEEALEETVEAPAEA.

The protein belongs to the bacterial ribosomal protein bL9 family.

Binds to the 23S rRNA. The protein is Large ribosomal subunit protein bL9 of Gluconacetobacter diazotrophicus (strain ATCC 49037 / DSM 5601 / CCUG 37298 / CIP 103539 / LMG 7603 / PAl5).